Consider the following 417-residue polypeptide: Hydrogen cyanide synthase subunit HcnC (417 aa).

The signal sequence occupies residues methionine 1 to serine 18. Isoleucine 7–tyrosine 21 serves as a coordination point for FAD. Cysteine 19 carries N-palmitoyl cysteine lipidation. Residue cysteine 19 is the site of S-diacylglycerol cysteine attachment. Residues serine 46–phenylalanine 66 traverse the membrane as a helical segment.

Belongs to the FAD-dependent glycerol-3-phosphate dehydrogenase family. As to quaternary structure, heterotrimer of HcnA, HcnB and HcnC. The cofactor is FAD.

The protein resides in the cell membrane. It carries out the reaction glycine + 2 A = hydrogen cyanide + 2 AH2 + CO2. With respect to regulation, oxygen is necessary for cyanogenesis. Activated by succinate, glycine methyl ester, glucose and D,L-methionine in addition to glycine. Phenazine methosulfate, methylene blue, 2,6-dichlorophenolindophenol (DCIP) and ferricyanide can replace oxygen for the reaction. Inhibited by pyrrolnitrin and acriflavine at 1 mM concentration. Its function is as follows. A three-component membrane-bound flavoenzyme that catalyzes the formation of hydrogen cyanide, a secondary metabolite, by transfer of electrons to a cyanide-resistant branch of the aerobic respiratory chain. The polypeptide is Hydrogen cyanide synthase subunit HcnC (Pseudomonas aeruginosa (strain ATCC 15692 / DSM 22644 / CIP 104116 / JCM 14847 / LMG 12228 / 1C / PRS 101 / PAO1)).